The chain runs to 159 residues: Nucleotide-binding protein PLES_47741 (159 aa).

It belongs to the YajQ family.

Its function is as follows. Nucleotide-binding protein. This is Nucleotide-binding protein PLES_47741 from Pseudomonas aeruginosa (strain LESB58).